We begin with the raw amino-acid sequence, 629 residues long: tRNA uridine 5-carboxymethylaminomethyl modification enzyme MnmG (629 aa).

13 to 18 is a binding site for FAD; it reads GGGHAG. Position 273-287 (273-287) interacts with NAD(+); the sequence is GPRYCPSIEDKINRF.

Belongs to the MnmG family. As to quaternary structure, homodimer. Heterotetramer of two MnmE and two MnmG subunits. The cofactor is FAD.

Its subcellular location is the cytoplasm. In terms of biological role, NAD-binding protein involved in the addition of a carboxymethylaminomethyl (cmnm) group at the wobble position (U34) of certain tRNAs, forming tRNA-cmnm(5)s(2)U34. The chain is tRNA uridine 5-carboxymethylaminomethyl modification enzyme MnmG from Shewanella piezotolerans (strain WP3 / JCM 13877).